Here is a 102-residue protein sequence, read N- to C-terminus: NADH-quinone oxidoreductase subunit K 1 (102 aa).

3 helical membrane-spanning segments follow: residues 5–25 (LSHYLTVSAILFTLGVFGIFL), 31–51 (IVILMSVELILLAVNINMVAF), and 65–85 (LFILTVAAAEAAIGLAILVVF).

The protein belongs to the complex I subunit 4L family. As to quaternary structure, NDH-1 is composed of 14 different subunits. Subunits NuoA, H, J, K, L, M, N constitute the membrane sector of the complex.

The protein resides in the cell inner membrane. The catalysed reaction is a quinone + NADH + 5 H(+)(in) = a quinol + NAD(+) + 4 H(+)(out). Functionally, NDH-1 shuttles electrons from NADH, via FMN and iron-sulfur (Fe-S) centers, to quinones in the respiratory chain. The immediate electron acceptor for the enzyme in this species is believed to be ubiquinone. Couples the redox reaction to proton translocation (for every two electrons transferred, four hydrogen ions are translocated across the cytoplasmic membrane), and thus conserves the redox energy in a proton gradient. The chain is NADH-quinone oxidoreductase subunit K 1 from Rhizobium etli (strain ATCC 51251 / DSM 11541 / JCM 21823 / NBRC 15573 / CFN 42).